The following is a 291-amino-acid chain: Phosphatidylserine decarboxylase proenzyme (291 aa).

Active-site charge relay system; for autoendoproteolytic cleavage activity residues include Asp93, His150, and Ser253. Residue Ser253 is the Schiff-base intermediate with substrate; via pyruvic acid; for decarboxylase activity of the active site. Ser253 bears the Pyruvic acid (Ser); by autocatalysis mark.

The protein belongs to the phosphatidylserine decarboxylase family. PSD-B subfamily. Prokaryotic type I sub-subfamily. As to quaternary structure, heterodimer of a large membrane-associated beta subunit and a small pyruvoyl-containing alpha subunit. The cofactor is pyruvate. Is synthesized initially as an inactive proenzyme. Formation of the active enzyme involves a self-maturation process in which the active site pyruvoyl group is generated from an internal serine residue via an autocatalytic post-translational modification. Two non-identical subunits are generated from the proenzyme in this reaction, and the pyruvate is formed at the N-terminus of the alpha chain, which is derived from the carboxyl end of the proenzyme. The autoendoproteolytic cleavage occurs by a canonical serine protease mechanism, in which the side chain hydroxyl group of the serine supplies its oxygen atom to form the C-terminus of the beta chain, while the remainder of the serine residue undergoes an oxidative deamination to produce ammonia and the pyruvoyl prosthetic group on the alpha chain. During this reaction, the Ser that is part of the protease active site of the proenzyme becomes the pyruvoyl prosthetic group, which constitutes an essential element of the active site of the mature decarboxylase.

Its subcellular location is the cell membrane. It carries out the reaction a 1,2-diacyl-sn-glycero-3-phospho-L-serine + H(+) = a 1,2-diacyl-sn-glycero-3-phosphoethanolamine + CO2. The protein operates within phospholipid metabolism; phosphatidylethanolamine biosynthesis; phosphatidylethanolamine from CDP-diacylglycerol: step 2/2. In terms of biological role, catalyzes the formation of phosphatidylethanolamine (PtdEtn) from phosphatidylserine (PtdSer). This Alcanivorax borkumensis (strain ATCC 700651 / DSM 11573 / NCIMB 13689 / SK2) protein is Phosphatidylserine decarboxylase proenzyme.